The primary structure comprises 262 residues: Insulin-like growth factor-binding protein 1 (262 aa).

The N-terminal stretch at 1-25 is a signal peptide; that stretch reads MPEVPAVRAWPLLLSLALQLGAAAG. An IGFBP N-terminal domain is found at 28-108; the sequence is QPLHCAPCSA…TRGQGACMPA (81 aa). 6 disulfide bridges follow: Cys32-Cys59, Cys35-Cys61, Cys43-Cys62, Cys50-Cys65, Cys72-Cys85, and Cys79-Cys105. Positions 101 to 133 are disordered; it reads GQGACMPAPSAEATETKDPAAPETTSPESTEMT. Low complexity predominate over residues 121–131; that stretch reads APETTSPESTE. 3 positions are modified to phosphoserine: Ser126, Ser129, and Ser147. Position 161 is a phosphotyrosine (Tyr161). The Thyroglobulin type-1 domain occupies 176-254; that stretch reads KEPCQRELYK…STAVRGDPKC (79 aa). Cystine bridges form between Cys179–Cys209, Cys220–Cys231, and Cys233–Cys254. Position 245 is a phosphoserine (Ser245). A Cell attachment site motif is present at residues 249 to 251; the sequence is RGD.

As to quaternary structure, binds equally well IGF1 and IGF2. Interacts with integrin ITGA5:ITGB1. Interacts with VHL; this interaction inhibits HIF1A degradation.

It is found in the secreted. In terms of biological role, multifunctional protein that plays a critical role in regulating the availability of IGFs such as IGF1 and IGF2 to their receptors and thereby regulates IGF-mediated cellular processes including cell migration, proliferation, differentiation or apoptosis in a cell-type specific manner. Also plays a positive role in cell migration by interacting with integrin ITGA5:ITGB1 through its RGD motif. Mechanistically, binding to integrins leads to activation of focal adhesion kinase/PTK2 and stimulation of the mitogen-activated protein kinase (MAPK) pathway. Regulates cardiomyocyte apoptosis by suppressing HIF-1alpha/HIF1A degradation through ubiquitination. The polypeptide is Insulin-like growth factor-binding protein 1 (IGFBP1) (Sus scrofa (Pig)).